The following is a 159-amino-acid chain: Ribosomal RNA large subunit methyltransferase H (159 aa).

S-adenosyl-L-methionine contacts are provided by residues Leu76, Gly108, and 127-132; that span reads FSKMTF.

This sequence belongs to the RNA methyltransferase RlmH family. Homodimer.

The protein resides in the cytoplasm. It carries out the reaction pseudouridine(1915) in 23S rRNA + S-adenosyl-L-methionine = N(3)-methylpseudouridine(1915) in 23S rRNA + S-adenosyl-L-homocysteine + H(+). Functionally, specifically methylates the pseudouridine at position 1915 (m3Psi1915) in 23S rRNA. This is Ribosomal RNA large subunit methyltransferase H from Clostridium botulinum (strain Eklund 17B / Type B).